We begin with the raw amino-acid sequence, 544 residues long: Probable protein kinase UbiB (544 aa).

Residues Asp-123–Leu-501 form the Protein kinase domain. ATP contacts are provided by residues Leu-129–Val-137 and Lys-152. Asp-287 serves as the catalytic Proton acceptor. The next 2 helical transmembrane spans lie at Ala-496–Val-516 and Thr-519–Trp-539.

It belongs to the ABC1 family. UbiB subfamily.

The protein resides in the cell inner membrane. It functions in the pathway cofactor biosynthesis; ubiquinone biosynthesis [regulation]. Functionally, is probably a protein kinase regulator of UbiI activity which is involved in aerobic coenzyme Q (ubiquinone) biosynthesis. The polypeptide is Probable protein kinase UbiB (Vibrio vulnificus (strain CMCP6)).